The chain runs to 264 residues: Apolipoprotein A-I (264 aa).

An N-terminal signal peptide occupies residues 1–18 (MKAVVLALAVLFLTGSQA). 2 repeat units span residues 67–88 (LHLL…EQLG) and 89–110 (PVTH…QEMN). Positions 67–264 (LHLLDNWDTL…DEASKKLNAQ (198 aa)) are 10 X approximate tandem repeats. Met109 carries the post-translational modification Methionine sulfoxide. One copy of the 3; half-length repeat lies at 111–121 (KDLEEVKVKVQ). 5 consecutive repeat copies span residues 122–143 (PYLD…EKVG), 144–165 (PLGA…EKLT), 166–187 (PLGE…TQLA), 188–207 (PYSD…IRDS), and 208–229 (PSLA…EKAK). Residues 230 to 240 (PALEDLRQGLM) form a 9; half-length repeat. Residues 241–264 (PVLENLKTTVLAAIDEASKKLNAQ) form repeat 10.

It belongs to the apolipoprotein A1/A4/E family. Homodimer. Interacts with APOA1BP and CLU. Component of a sperm activating protein complex (SPAP), consisting of APOA1, an immunoglobulin heavy chain, an immunoglobulin light chain and albumin. Interacts with NDRG1. Interacts with SCGB3A2. Interacts with NAXE and YJEFN3. In terms of processing, glycosylated. Palmitoylated. Post-translationally, phosphorylation sites are present in the extracellular medium.

Its subcellular location is the secreted. In terms of biological role, participates in the reverse transport of cholesterol from tissues to the liver for excretion by promoting cholesterol efflux from tissues and by acting as a cofactor for the lecithin cholesterol acyltransferase (LCAT). As part of the SPAP complex, activates spermatozoa motility. This chain is Apolipoprotein A-I (APOA1), found in Jaculus jaculus (Lesser Egyptian jerboa).